A 74-amino-acid polypeptide reads, in one-letter code: Protein krueppel (74 aa).

4 C2H2-type zinc fingers span residues 1–4 (ERTH), 10–32 (FECPECHKRFTRDHHLKTHMRLH), 38–60 (YHCSHCDRQFVQVANLRRHLRVH), and 66–74 (YACELCAAK).

Belongs to the krueppel C2H2-type zinc-finger protein family.

It is found in the nucleus. Functionally, krueppel is a gap class segmentation protein. The polypeptide is Protein krueppel (Kr) (Apis mellifera (Honeybee)).